The sequence spans 674 residues: UvrABC system protein C (674 aa).

The GIY-YIG domain maps to 64–142 (NGPGVYRMLN…IKRLRPRFNV (79 aa)). A UVR domain is found at 252-287 (QAVKATIASAMAEASENLDFERAALYRDRLAALSHV).

The protein belongs to the UvrC family. Interacts with UvrB in an incision complex.

The protein localises to the cytoplasm. In terms of biological role, the UvrABC repair system catalyzes the recognition and processing of DNA lesions. UvrC both incises the 5' and 3' sides of the lesion. The N-terminal half is responsible for the 3' incision and the C-terminal half is responsible for the 5' incision. The sequence is that of UvrABC system protein C from Rhizobium meliloti (strain 1021) (Ensifer meliloti).